Reading from the N-terminus, the 312-residue chain is Olfactory receptor 1D5 (312 aa).

At 1–25 (MDGDNQSENSQFLLLGISESPEQQQ) the chain is on the extracellular side. Asparagine 5 carries an N-linked (GlcNAc...) asparagine glycan. A helical transmembrane segment spans residues 26–49 (ILFWMFLSMYLVTVLGNVLIILAI). The Cytoplasmic segment spans residues 50–57 (SSDSHLHT). Residues 58–79 (PMYFFLANLSFTDLFFVTNTIP) traverse the membrane as a helical segment. Residues 80 to 100 (KMLVNFQSQNKAISYAGCLTQ) lie on the Extracellular side of the membrane. Cysteine 97 and cysteine 189 are joined by a disulfide. A helical transmembrane segment spans residues 101 to 120 (LYFLVSLVTLDNLILAVMAY). Topologically, residues 121–140 (DRYVAICCPLHYVTAMSPGL) are cytoplasmic. Residues 141–158 (CVLLLSLCWGLSVLYGLL) traverse the membrane as a helical segment. Over 159–196 (LTLLLTRVTFCGPREIHYLFCDMYILLRLACSNTHIIH) the chain is Extracellular. A helical transmembrane segment spans residues 197–220 (TVLVATGCFIFLTPLGFMTTSYVC). At 221 to 237 (IVRTILQIPSASKKYKA) the chain is on the cytoplasmic side. The helical transmembrane segment at 238–260 (FSTCASHLGVVSLFYGTLAMVYL) threads the bilayer. At 261 to 271 (QPLHTYSMKDS) the chain is on the extracellular side. The helical transmembrane segment at 272–291 (VATVMYAVVTPMMNPFIYSL) threads the bilayer. The Cytoplasmic portion of the chain corresponds to 292–312 (RNKDMHGALGRVLRRLFQRPK).

Belongs to the G-protein coupled receptor 1 family.

It localises to the cell membrane. Its function is as follows. Odorant receptor. This Pan paniscus (Pygmy chimpanzee) protein is Olfactory receptor 1D5 (OR1D5).